We begin with the raw amino-acid sequence, 220 residues long: 7-cyano-7-deazaguanine synthase (220 aa).

10 to 20 provides a ligand contact to ATP; that stretch reads FSGGQDSTTCL. Residues C186, C195, C198, and C201 each contribute to the Zn(2+) site.

It belongs to the QueC family. In terms of assembly, homodimer. Requires Zn(2+) as cofactor.

It catalyses the reaction 7-carboxy-7-deazaguanine + NH4(+) + ATP = 7-cyano-7-deazaguanine + ADP + phosphate + H2O + H(+). The protein operates within purine metabolism; 7-cyano-7-deazaguanine biosynthesis. Catalyzes the ATP-dependent conversion of 7-carboxy-7-deazaguanine (CDG) to 7-cyano-7-deazaguanine (preQ(0)). The sequence is that of 7-cyano-7-deazaguanine synthase from Bacillus mycoides (strain KBAB4) (Bacillus weihenstephanensis).